Consider the following 405-residue polypeptide: Elongation factor Tu (405 aa).

Residues 10–215 (KPHVNVGTIG…AIDAYIPTPE (206 aa)) enclose the tr-type G domain. Positions 19-26 (GHVDHGKT) are G1. A GTP-binding site is contributed by 19–26 (GHVDHGKT). Threonine 26 is a binding site for Mg(2+). Residues 61 to 65 (GITIN) are G2. A G3 region spans residues 82–85 (DCPG). GTP is bound by residues 82–86 (DCPGH) and 137–140 (NKVD). Residues 137–140 (NKVD) form a G4 region. A G5 region spans residues 175–177 (SAL).

This sequence belongs to the TRAFAC class translation factor GTPase superfamily. Classic translation factor GTPase family. EF-Tu/EF-1A subfamily. As to quaternary structure, monomer.

Its subcellular location is the cytoplasm. It carries out the reaction GTP + H2O = GDP + phosphate + H(+). GTP hydrolase that promotes the GTP-dependent binding of aminoacyl-tRNA to the A-site of ribosomes during protein biosynthesis. This chain is Elongation factor Tu, found in Deinococcus geothermalis (strain DSM 11300 / CIP 105573 / AG-3a).